The following is a 305-amino-acid chain: Glycine--tRNA ligase alpha subunit (305 aa).

Belongs to the class-II aminoacyl-tRNA synthetase family. Tetramer of two alpha and two beta subunits.

Its subcellular location is the cytoplasm. The catalysed reaction is tRNA(Gly) + glycine + ATP = glycyl-tRNA(Gly) + AMP + diphosphate. The protein is Glycine--tRNA ligase alpha subunit of Janthinobacterium sp. (strain Marseille) (Minibacterium massiliensis).